The chain runs to 84 residues: UPF0248 protein Pisl_1919 (84 aa).

Belongs to the UPF0248 family.

The protein is UPF0248 protein Pisl_1919 of Pyrobaculum islandicum (strain DSM 4184 / JCM 9189 / GEO3).